The chain runs to 164 residues: Peptide deformylase (164 aa).

Fe cation-binding residues include Cys87 and His129. Glu130 is a catalytic residue. His133 contributes to the Fe cation binding site.

It belongs to the polypeptide deformylase family. Fe(2+) is required as a cofactor.

It carries out the reaction N-terminal N-formyl-L-methionyl-[peptide] + H2O = N-terminal L-methionyl-[peptide] + formate. Its function is as follows. Removes the formyl group from the N-terminal Met of newly synthesized proteins. Requires at least a dipeptide for an efficient rate of reaction. N-terminal L-methionine is a prerequisite for activity but the enzyme has broad specificity at other positions. This Thermotoga maritima (strain ATCC 43589 / DSM 3109 / JCM 10099 / NBRC 100826 / MSB8) protein is Peptide deformylase.